The following is a 387-amino-acid chain: EARP and GARP complex-interacting protein 1 (387 aa).

Methionine 1 is subject to N-acetylmethionine. WD repeat units lie at residues 132–172, 180–222, 226–266, and 270–310; these read TAHS…SQAV, GGKG…QIYC, AHGQ…EPVK, and EHSH…SEPF. Residues 310–334 form a disordered region; that stretch reads FGHLVDDDDISDQEDHRSEEKSKEP. At serine 320 the chain carries Phosphoserine. Basic and acidic residues predominate over residues 322-334; that stretch reads QEDHRSEEKSKEP. One copy of the WD 5 repeat lies at 345–385; the sequence is EHEDSVYAVDWSSADPWLFASLSYDGRLVINRVPRALKYHI.

It belongs to the WD repeat EIPR1 family. As to quaternary structure, interacts with two multisubunit tethering complexes: EARP composed of VPS50, VPS51, VPS52 and VPS53 subunits and GARP complex composed of VPS51, VPS52, VPS53 and VPS54 subunits. Interacts with SNAP29.

It localises to the golgi apparatus. It is found in the trans-Golgi network. Its function is as follows. Acts as a component of endosomal retrieval machinery that is involved in protein transport from early endosomes to either recycling endosomes or the trans-Golgi network. Mediates the recruitment of Golgi-associated retrograde protein (GARP) complex to the trans-Golgi network and controls early endosome-to-Golgi transport of internalized protein. Promotes the recycling of internalized transferrin receptor (TFRC) to the plasma membrane through interaction with endosome-associated recycling protein (EARP) complex. Controls proper insulin distribution and secretion, and retention of cargo in mature dense core vesicles. Required for the stability of the endosome-associated retrograde protein (EARP) complex subunits and for proper localization and association of EARP with membranes. The chain is EARP and GARP complex-interacting protein 1 from Macaca fascicularis (Crab-eating macaque).